Consider the following 242-residue polypeptide: Platinum sensitivity protein 3 (242 aa).

Component of the SHU complex composed of at least CSM2, PSY3, SHU1 and SHU2.

The protein localises to the nucleus. Its function is as follows. Required for resistance to the DNA-damaging agents methyl methanesulfonate (MMS), cisplatin and oxaliplatin, but not to mitomycin C. Plays a role in protection against mutation accumulation. May be a component of the recombination-repair pathway. The protein is Platinum sensitivity protein 3 (PSY3) of Saccharomyces cerevisiae (strain ATCC 204508 / S288c) (Baker's yeast).